Consider the following 606-residue polypeptide: NADH-ubiquinone oxidoreductase chain 5 (606 aa).

15 consecutive transmembrane segments (helical) span residues 3–23 (VINL…LPIT), 38–58 (ITKM…LLFL), 87–107 (FFSL…MEFS), 124–144 (LLLF…LQLF), 180–200 (IGDM…NSWE), 216–236 (LLGL…HPWL), 244–264 (TPVS…FTLI), 276–296 (IQTS…ICAL), 304–323 (IIAL…IGIN), 328–350 (AFTH…GSII), 369–389 (MPIT…MPFL), 404–424 (MSYI…MTAS), 460–480 (LILG…PHTT), 483–503 (MTMP…GFTV), and 586–606 (LMKL…LITL).

The protein belongs to the complex I subunit 5 family. Core subunit of respiratory chain NADH dehydrogenase (Complex I) which is composed of 45 different subunits.

The protein resides in the mitochondrion inner membrane. It catalyses the reaction a ubiquinone + NADH + 5 H(+)(in) = a ubiquinol + NAD(+) + 4 H(+)(out). Functionally, core subunit of the mitochondrial membrane respiratory chain NADH dehydrogenase (Complex I) which catalyzes electron transfer from NADH through the respiratory chain, using ubiquinone as an electron acceptor. Essential for the catalytic activity and assembly of complex I. This is NADH-ubiquinone oxidoreductase chain 5 (MT-ND5) from Elephas maximus (Indian elephant).